We begin with the raw amino-acid sequence, 817 residues long: Protein hunchback (817 aa).

Disordered stretches follow at residues 51–77, 93–132, and 187–252; these read PGTINPHHQHPQQHSSMMASQPQHSPL, HNGGGAHHLQFSDNSGAMTPSPNTNVGGQDFGFESNTSSA, and YSQQ…EDQD. Residues 62–76 are compositionally biased toward low complexity; sequence QQHSSMMASQPQHSP. Polar residues predominate over residues 103–119; it reads FSDNSGAMTPSPNTNVG. The span at 189–201 shows a compositional bias: low complexity; the sequence is QQQQQQQQRQLQQ. 4 C2H2-type zinc fingers span residues 287–309, 316–338, 344–366, and 372–396; these read HKCKSCGMVAITKMAFWEHARTH, LQCPKCPFVTELKHHLEYHIRKH, FQCDKCSYSCVNKSMLNSHRKSH, and YRCADCDYATKYCHSFKLHLRKYEH. 4 disordered regions span residues 456-477, 491-513, 564-619, and 666-758; these read PLQQQQQPQQPASPAKSSSSVA, QNLAQQQQQQQQSPGAQSHSSQQ, QLQQ…QQTP, and APTS…AGNS. Residues 564–576 are compositionally biased toward low complexity; it reads QLQQQQQNKQANE. Over residues 577-595 the composition is skewed to acidic residues; it reads NGEEDEEDNDEVDEDEEEF. Residues 680 to 694 are compositionally biased toward polar residues; the sequence is MPPTTSSPIHPSQVN. Low complexity predominate over residues 721–758; sequence PTTANTSASSTASSSGNSSNSSSTSTSSNSNSSSAGNS. 2 C2H2-type zinc fingers span residues 764-786 and 792-816; these read YECKYCDIFFKDAVLYTIHMGYH and FKCNMCGEKCDGPVGLFVHMARNAH.

This sequence belongs to the hunchback C2H2-type zinc-finger protein family.

It is found in the nucleus. In terms of biological role, gap class segmentation protein that controls development of head structures. This Musca domestica (House fly) protein is Protein hunchback (hb).